We begin with the raw amino-acid sequence, 140 residues long: uncharacterized protein (140 aa).

This sequence belongs to the asfivirus D129L family.

This is an uncharacterized protein from African swine fever virus (isolate Pig/Kenya/KEN-50/1950) (ASFV).